Here is a 352-residue protein sequence, read N- to C-terminus: Ni-sirohydrochlorin a,c-diamide reductive cyclase complex, component CfbD (352 aa).

The protein belongs to the NifD/NifK/NifE/NifN family. In terms of assembly, homodimer or monomer. The Ni-sirohydrochlorin a,c-diamide reductive cyclase complex is composed of a NifH homolog component CfbC and a NifD homolog component CfbD. Requires [4Fe-4S] cluster as cofactor.

It carries out the reaction Ni-sirohydrochlorin a,c-diamide + 3 AH2 + ATP + H2O = 15,17(3)-seco-F430-17(3)-acid + 3 A + ADP + phosphate. Its function is as follows. Involved in the biosynthesis of the unique nickel-containing tetrapyrrole coenzyme F430, the prosthetic group of methyl-coenzyme M reductase (MCR), which plays a key role in methanogenesis and anaerobic methane oxidation. Catalyzes both the six-electron reduction of the tetrahydroporphyrin ring system and the gamma-lactamization of the c-acetamide side chain of Ni-sirohydrochlorin a,c-diamide to yield 15,17(3)-seco-F430-17(3)-acid (seco-F430), the last intermediate in the biosynthesis of the coenzyme F430. This Methanocaldococcus jannaschii (strain ATCC 43067 / DSM 2661 / JAL-1 / JCM 10045 / NBRC 100440) (Methanococcus jannaschii) protein is Ni-sirohydrochlorin a,c-diamide reductive cyclase complex, component CfbD.